Consider the following 511-residue polypeptide: Maturase K (511 aa).

Belongs to the intron maturase 2 family. MatK subfamily.

The protein resides in the plastid. Usually encoded in the trnK tRNA gene intron. Probably assists in splicing its own and other chloroplast group II introns. The protein is Maturase K of Lathraea clandestina (Purple toothwort).